The primary structure comprises 256 residues: Large ribosomal subunit protein eL8y (256 aa).

Residues methionine 1–proline 15 are compositionally biased toward basic residues. The interval methionine 1–asparagine 20 is disordered.

The protein belongs to the eukaryotic ribosomal protein eL8 family.

The chain is Large ribosomal subunit protein eL8y (RPL7AB) from Arabidopsis thaliana (Mouse-ear cress).